Reading from the N-terminus, the 348-residue chain is N-acetyl-gamma-glutamyl-phosphate reductase (348 aa).

Cys151 is an active-site residue.

The protein belongs to the NAGSA dehydrogenase family. Type 1 subfamily.

The protein resides in the cytoplasm. The enzyme catalyses N-acetyl-L-glutamate 5-semialdehyde + phosphate + NADP(+) = N-acetyl-L-glutamyl 5-phosphate + NADPH + H(+). The protein operates within amino-acid biosynthesis; L-arginine biosynthesis; N(2)-acetyl-L-ornithine from L-glutamate: step 3/4. Its function is as follows. Catalyzes the NADPH-dependent reduction of N-acetyl-5-glutamyl phosphate to yield N-acetyl-L-glutamate 5-semialdehyde. The chain is N-acetyl-gamma-glutamyl-phosphate reductase from Lachnospira eligens (strain ATCC 27750 / DSM 3376 / VPI C15-48 / C15-B4) (Eubacterium eligens).